The chain runs to 370 residues: Alanine racemase (370 aa).

The active-site Proton acceptor; specific for D-alanine is the lysine 36. Lysine 36 is subject to N6-(pyridoxal phosphate)lysine. Arginine 134 contributes to the substrate binding site. Tyrosine 265 serves as the catalytic Proton acceptor; specific for L-alanine. Methionine 313 provides a ligand contact to substrate.

The protein belongs to the alanine racemase family. Pyridoxal 5'-phosphate serves as cofactor.

The enzyme catalyses L-alanine = D-alanine. It participates in amino-acid biosynthesis; D-alanine biosynthesis; D-alanine from L-alanine: step 1/1. Catalyzes the interconversion of L-alanine and D-alanine. May also act on other amino acids. The chain is Alanine racemase (alr) from Desulforamulus reducens (strain ATCC BAA-1160 / DSM 100696 / MI-1) (Desulfotomaculum reducens).